A 451-amino-acid polypeptide reads, in one-letter code: CDP-diacylglycerol--serine O-phosphatidyltransferase PssA (451 aa).

PLD phosphodiesterase domains lie at 27–224 (VDFF…ELRD) and 239–451 (SVTP…SRIL). The a CDP-1,2-diacyl-sn-glycerol site is built by L56, Y57, R91, R94, R96, I97, E132, A133, V136, H138, K140, G152, Y159, and R167. H138 is a catalytic residue. D169 is a catalytic residue. Residues Y273, D305, F306, I316, I317, L320, L323, and Y324 each coordinate a CDP-1,2-diacyl-sn-glycerol. Residue H357 is part of the active site. A CDP-1,2-diacyl-sn-glycerol is bound by residues K359, N374, and R378. Residue E385 is part of the active site. Residues L438, I447, I450, and L451 each coordinate a CDP-1,2-diacyl-sn-glycerol.

Belongs to the CDP-alcohol phosphatidyltransferase class-II family. As to quaternary structure, multimeric. Interacts with ACP, YbgC and PlsB, forming altogether a complex at the inner membrane. Monomeric and dimeric; existing in equilibrium, but the monomer probably exhibits preferential membrane association.

It localises to the cytoplasm. It is found in the cell inner membrane. It catalyses the reaction a CDP-1,2-diacyl-sn-glycerol + L-serine = a 1,2-diacyl-sn-glycero-3-phospho-L-serine + CMP + H(+). It participates in phospholipid metabolism; phosphatidylethanolamine biosynthesis; phosphatidylethanolamine from CDP-diacylglycerol: step 1/2. In terms of biological role, catalyzes the conversion of cytidine diphosphate diacylglycerol (CDP-DG) and L-serine into phosphatidylserine. Essential for biosynthesis of phosphatidylethanolamine, one of the major membrane phospholipids. Phosphatidylserine is later converted into phosphatidylethanolamine via the action of phosphatidylserine decarboxylase psd. Associates with the bacterial membrane for its role, which depends on the levels of anionic phospholipids in the membrane. The chain is CDP-diacylglycerol--serine O-phosphatidyltransferase PssA (pssA) from Escherichia coli (strain K12).